Here is a 413-residue protein sequence, read N- to C-terminus: MKEVVYWSPKKVADWLLENAMPEYCEPLEHFTGQDLINLTQEDFKKPPLCRVSSDNGQRLLDMIETLKMEHHLEAHKNGHANGHLNIGVDIPTPDGSFSIKIKPNGMPNGYRKEMIKIPMPELERSQYPMEWGKTFLAFLYALSCFVLTTVMISVVHERVPPKEVQPPLPDTFFDHFNRVQWAFSICEINGMILVGLWLIQWLLLKYKSIISRRFFCIVGTLYLYRCITMYVTTLPVPGMHFNCSPKLFGDWEAQLRRIMKLIAGGGLSITGSHNMCGDYLYSGHTVMLTLTYLFIKEYSPRRLWWYHWICWLLSVVGIFCILLAHDHYTVDVVVAYYITTRLFWWYHTMANQQVLKEASQMNLLARVWWYRPFQYFEKNVQGIVPRSYHWPFPWPVVHLSRQVKYSRLVNDT.

Positions 7–70 (WSPKKVADWL…LDMIETLKME (64 aa)) constitute an SAM domain. S8 carries the post-translational modification Phosphoserine. The next 5 membrane-spanning stretches (helical) occupy residues 136–156 (FLAF…ISVV), 184–204 (FSIC…QWLL), 215–235 (FFCI…VTTL), 276–296 (MCGD…YLFI), and 304–324 (LWWY…CILL). Residue H285 is part of the active site. Over 325 to 413 (AHDHYTVDVV…VKYSRLVNDT (89 aa)) the chain is Cytoplasmic. Catalysis depends on residues H328 and D332.

It belongs to the sphingomyelin synthase family. As to expression, brain, heart, kidney, liver, muscle and stomach.

Its subcellular location is the golgi apparatus membrane. It catalyses the reaction an N-acylsphing-4-enine + a 1,2-diacyl-sn-glycero-3-phosphocholine = a sphingomyelin + a 1,2-diacyl-sn-glycerol. It carries out the reaction an N-acylsphinganine + a 1,2-diacyl-sn-glycero-3-phosphocholine = an N-acylsphinganine-1-phosphocholine + a 1,2-diacyl-sn-glycerol. The enzyme catalyses an N-acyl-(4R)-4-hydroxysphinganine + a 1,2-diacyl-sn-glycero-3-phosphocholine = an N-acyl-(4R)-4-hydroxysphinganine-phosphocholine + a 1,2-diacyl-sn-glycerol. The catalysed reaction is 1-(9Z-octadecenoyl)-2-acyl-sn-3-glycerol + a sphingomyelin = a 1-(9Z-octadecenoyl)-2-acyl-sn-glycero-3-phosphocholine + an N-acylsphing-4-enine. It catalyses the reaction N-hexadecanoylsphinganine + a 1,2-diacyl-sn-glycero-3-phosphocholine = N-hexadecanoyl-sphinganine-1-phosphocholine + a 1,2-diacyl-sn-glycerol. It carries out the reaction N-hexadecanoyl-(4R)-hydroxysphinganine + a 1,2-diacyl-sn-glycero-3-phosphocholine = N-hexadecanoyl-(4R)-hydroxysphinganine-phosphocholine + a 1,2-diacyl-sn-glycerol. The enzyme catalyses an N-acylsphing-4-enine + a 1,2-diacyl-sn-glycero-3-phosphoethanolamine = an N-acylsphing-4-enine 1-phosphoethanolamine + a 1,2-diacyl-sn-glycerol. It functions in the pathway sphingolipid metabolism. Inhibited by bacterial PC-phospholipase C inhibitor D609. Its function is as follows. Major sphingomyelin synthase at the Golgi apparatus. Catalyzes the reversible transfer of phosphocholine moiety in sphingomyelin biosynthesis: in the forward reaction transfers phosphocholine head group of phosphatidylcholine (PC) on to ceramide (CER) to form ceramide phosphocholine (sphingomyelin, SM) and diacylglycerol (DAG) as by-product, and in the reverse reaction transfers phosphocholine from SM to DAG to form PC and CER. The direction of the reaction depends on the levels of CER and DAG in Golgi membranes. Converts the newly synthesized CER, that is transported from the endoplasmic reticulum to the trans-Golgi by the Cer transport protein (CERT), to SM. Can form a heteromeric complex with glucosylceramide synthase (GCS) increasing SMS activity and reducing glucosylceramide synthesis, a critical mechanism that controls the metabolic fate of CER in the Golgi. Does not use free phosphorylcholine or CDP-choline as donor. Can also transfer phosphoethanolamine head group of phosphatidylethanolamine (PE) on to CER to form ceramide phosphoethanolamine (CPE). Regulates receptor-mediated signal transduction via mitogenic DAG and proapoptotic CER, as well as via SM, a structural component of membrane rafts that serve as platforms for signal transduction and protein sorting. Plays a role in secretory transport via regulation of DAG pool at the Golgi apparatus and its downstream effects on PRKD1. This is Phosphatidylcholine:ceramide cholinephosphotransferase 1 (SGMS1) from Homo sapiens (Human).